Reading from the N-terminus, the 350-residue chain is Heat-inducible transcription repressor HrcA (350 aa).

It belongs to the HrcA family.

Negative regulator of class I heat shock genes (grpE-dnaK-dnaJ and groELS operons). Prevents heat-shock induction of these operons. The polypeptide is Heat-inducible transcription repressor HrcA (Limosilactobacillus reuteri (strain DSM 20016) (Lactobacillus reuteri)).